The primary structure comprises 343 residues: tRNA N6-adenosine threonylcarbamoyltransferase (343 aa).

Fe cation is bound by residues H120 and H124. Substrate-binding positions include 142–146 (VVSGG), D175, G188, D192, and N281. D310 contacts Fe cation.

It belongs to the KAE1 / TsaD family. Requires Fe(2+) as cofactor.

Its subcellular location is the cytoplasm. It catalyses the reaction L-threonylcarbamoyladenylate + adenosine(37) in tRNA = N(6)-L-threonylcarbamoyladenosine(37) in tRNA + AMP + H(+). Required for the formation of a threonylcarbamoyl group on adenosine at position 37 (t(6)A37) in tRNAs that read codons beginning with adenine. Is involved in the transfer of the threonylcarbamoyl moiety of threonylcarbamoyl-AMP (TC-AMP) to the N6 group of A37, together with TsaE and TsaB. TsaD likely plays a direct catalytic role in this reaction. This chain is tRNA N6-adenosine threonylcarbamoyltransferase, found in Bacillus cereus (strain ATCC 10987 / NRS 248).